Consider the following 364-residue polypeptide: Fructose-bisphosphate aldolase B (364 aa).

Residues R56 and K147 each coordinate substrate. E188 serves as the catalytic Proton acceptor. K230 serves as the catalytic Schiff-base intermediate with dihydroxyacetone-P.

The protein belongs to the class I fructose-bisphosphate aldolase family. Homotetramer.

Its subcellular location is the cytoplasm. It is found in the cytoskeleton. It localises to the microtubule organizing center. The protein resides in the centrosome. The protein localises to the centriolar satellite. The enzyme catalyses beta-D-fructose 1,6-bisphosphate = D-glyceraldehyde 3-phosphate + dihydroxyacetone phosphate. The protein operates within carbohydrate degradation; glycolysis; D-glyceraldehyde 3-phosphate and glycerone phosphate from D-glucose: step 4/4. The protein is Fructose-bisphosphate aldolase B (aldob) of Sparus aurata (Gilthead sea bream).